The chain runs to 180 residues: Adenine phosphoribosyltransferase (180 aa).

N-acetylalanine is present on A2. Phosphoserine is present on residues S4, S15, and S30. Y60 is subject to Phosphotyrosine. S66 bears the Phosphoserine mark. An N6-acetyllysine modification is found at K114. T135 bears the Phosphothreonine mark.

Belongs to the purine/pyrimidine phosphoribosyltransferase family. As to quaternary structure, homodimer.

The protein localises to the cytoplasm. It catalyses the reaction AMP + diphosphate = 5-phospho-alpha-D-ribose 1-diphosphate + adenine. It functions in the pathway purine metabolism; AMP biosynthesis via salvage pathway; AMP from adenine: step 1/1. Its function is as follows. Catalyzes a salvage reaction resulting in the formation of AMP, that is energically less costly than de novo synthesis. The chain is Adenine phosphoribosyltransferase from Homo sapiens (Human).